A 368-amino-acid polypeptide reads, in one-letter code: Glutamyl-tRNA reductase (368 aa).

Substrate-binding positions include 43 to 46, serine 89, 94 to 96, and glutamine 100; these read TCHR and EHQ. Catalysis depends on cysteine 44, which acts as the Nucleophile. 164–169 is an NADP(+) binding site; it reads GTGMMG.

Belongs to the glutamyl-tRNA reductase family. As to quaternary structure, homodimer.

The enzyme catalyses (S)-4-amino-5-oxopentanoate + tRNA(Glu) + NADP(+) = L-glutamyl-tRNA(Glu) + NADPH + H(+). It functions in the pathway porphyrin-containing compound metabolism; protoporphyrin-IX biosynthesis; 5-aminolevulinate from L-glutamyl-tRNA(Glu): step 1/2. In terms of biological role, catalyzes the NADPH-dependent reduction of glutamyl-tRNA(Glu) to glutamate 1-semialdehyde (GSA). The chain is Glutamyl-tRNA reductase from Thermosipho melanesiensis (strain DSM 12029 / CIP 104789 / BI429).